Reading from the N-terminus, the 554-residue chain is Developmental and secondary metabolism regulator ve-1 (554 aa).

Residues 31–230 (GRKLWYSLRV…AEQGCRVRIR (200 aa)) enclose the Velvet domain. The short motif at 45-50 (LRARAC) is the Nuclear localization signal element. Residues 166-175 (TKEDKDKDPE) show a composition bias toward basic and acidic residues. Disordered stretches follow at residues 166–190 (TKED…SFDF), 232–430 (DVRM…PHRL), and 465–528 (PRAY…VDDK). Positions 276-292 (RSMSGSTERTPYSSISD) are enriched in polar residues. Pro residues-rich tracts occupy residues 363–372 (SYPPPPPPHQ) and 485–494 (LPPPPPPPPQ). The PEST stretch occupies residues 455–487 (SPSNMAAPPYPRAYSVSNSGGLTSAGGYNQLPP). Basic and acidic residues predominate over residues 500 to 528 (RAHDQTFRADPEMRRYQDGARERESVDDK).

It belongs to the velvet family. VeA subfamily. Component of the heterotrimeric velvet complex composed of lae-1, ve-1 and vel-2; Ve-1 acting as a bridging protein between lae-1 and vel-2.

The protein resides in the nucleus. It localises to the cytoplasm. Functionally, component of the velvet transcription factor complex that controls sexual/asexual developmental ratio in response to light, promoting sexual development in the darkness while stimulating asexual sporulation under illumination. The velvet complex hat acts as a global regulator for secondary metabolite gene expression. In Neurospora crassa (strain ATCC 24698 / 74-OR23-1A / CBS 708.71 / DSM 1257 / FGSC 987), this protein is Developmental and secondary metabolism regulator ve-1.